A 275-amino-acid polypeptide reads, in one-letter code: Proteasome subunit beta (275 aa).

The propeptide at 1-52 (MQDTTANQVAANATSSFTEHLQRNRPGLLPYNQPFPAALTGAGSQPLQVPHA) is removed in mature form; by autocatalysis. T53 serves as the catalytic Nucleophile.

It belongs to the peptidase T1B family. The 20S proteasome core is composed of 14 alpha and 14 beta subunits that assemble into four stacked heptameric rings, resulting in a barrel-shaped structure. The two inner rings, each composed of seven catalytic beta subunits, are sandwiched by two outer rings, each composed of seven alpha subunits. The catalytic chamber with the active sites is on the inside of the barrel. Has a gated structure, the ends of the cylinder being occluded by the N-termini of the alpha-subunits. Is capped by the proteasome-associated ATPase, ARC.

The protein resides in the cytoplasm. The catalysed reaction is Cleavage of peptide bonds with very broad specificity.. It functions in the pathway protein degradation; proteasomal Pup-dependent pathway. The formation of the proteasomal ATPase ARC-20S proteasome complex, likely via the docking of the C-termini of ARC into the intersubunit pockets in the alpha-rings, may trigger opening of the gate for substrate entry. Interconversion between the open-gate and close-gate conformations leads to a dynamic regulation of the 20S proteasome proteolysis activity. Functionally, component of the proteasome core, a large protease complex with broad specificity involved in protein degradation. In Arthrobacter sp. (strain FB24), this protein is Proteasome subunit beta.